Reading from the N-terminus, the 177-residue chain is Ribosome rescue factor SmrB (177 aa).

The tract at residues 22-45 (SKKLRQDTIIHQPSKNFSEQQKQR) is disordered. The segment covering 30 to 41 (IIHQPSKNFSEQ) has biased composition (polar residues). One can recognise a Smr domain in the interval 98–173 (LDMHGMKQDE…GAGAILVLLS (76 aa)).

The protein belongs to the SmrB family. In terms of assembly, associates with collided ribosomes, but not with correctly translating polysomes.

In terms of biological role, acts as a ribosome collision sensor. Detects stalled/collided disomes (pairs of ribosomes where the leading ribosome is stalled and a second ribosome has collided with it) and endonucleolytically cleaves mRNA at the 5' boundary of the stalled ribosome. Stalled/collided disomes form a new interface (primarily via the 30S subunits) that binds SmrB. Cleaved mRNA becomes available for tmRNA ligation, leading to ribosomal subunit dissociation and rescue of stalled ribosomes. This chain is Ribosome rescue factor SmrB, found in Aliivibrio salmonicida (strain LFI1238) (Vibrio salmonicida (strain LFI1238)).